A 467-amino-acid polypeptide reads, in one-letter code: Asparagine--tRNA ligase (467 aa).

Belongs to the class-II aminoacyl-tRNA synthetase family. As to quaternary structure, homodimer.

The protein localises to the cytoplasm. It catalyses the reaction tRNA(Asn) + L-asparagine + ATP = L-asparaginyl-tRNA(Asn) + AMP + diphosphate + H(+). The polypeptide is Asparagine--tRNA ligase (Legionella pneumophila (strain Corby)).